Reading from the N-terminus, the 332-residue chain is Zinc finger protein CONSTANS-LIKE 13 (332 aa).

Positions 13, 16, 36, 41, 56, 59, 79, and 84 each coordinate Zn(2+). The B box-type 1; atypical zinc finger occupies 13–55 (CDYCDSSVALVYCKADSAKLCLACDKQVHVANQLFAKHFRSLL). The B box-type 2; atypical zinc-finger motif lies at 56 to 96 (CDSCNESPSSLFCETERSVLCQNCDWQHHTASSSLHSRRPF). Positions 287–329 (RNSALSRYKEKKKSRRYEKHIRYESRKVRAESRTRIRGRFAKA) constitute a CCT domain.

Belongs to the CONSTANS family.

The protein localises to the nucleus. The sequence is that of Zinc finger protein CONSTANS-LIKE 13 (COL13) from Arabidopsis thaliana (Mouse-ear cress).